Here is a 316-residue protein sequence, read N- to C-terminus: Protoheme IX farnesyltransferase (316 aa).

9 consecutive transmembrane segments (helical) span residues 28 to 48, 50 to 70, 99 to 119, 122 to 142, 150 to 170, 178 to 198, 223 to 243, 244 to 264, and 293 to 313; these read IIPL…KGQV, PLLL…AQTL, HALI…VFFV, LSGF…THLL, IVIG…AVTG, ILFA…ALMI, IWLY…PLAA, CGVV…KKAW, and AMVI…ASLF.

Belongs to the UbiA prenyltransferase family. Protoheme IX farnesyltransferase subfamily.

Its subcellular location is the cell inner membrane. It catalyses the reaction heme b + (2E,6E)-farnesyl diphosphate + H2O = Fe(II)-heme o + diphosphate. Its pathway is porphyrin-containing compound metabolism; heme O biosynthesis; heme O from protoheme: step 1/1. Its function is as follows. Converts heme B (protoheme IX) to heme O by substitution of the vinyl group on carbon 2 of heme B porphyrin ring with a hydroxyethyl farnesyl side group. The chain is Protoheme IX farnesyltransferase from Microcystis aeruginosa (strain NIES-843 / IAM M-2473).